The sequence spans 490 residues: 3-octaprenyl-4-hydroxybenzoate carboxy-lyase (490 aa).

N172 lines the Mn(2+) pocket. Prenylated FMN is bound by residues 175–177, 189–191, and 194–195; these read IYR, RWL, and RG. Residue E238 coordinates Mn(2+). Residue D287 is the Proton donor of the active site.

It belongs to the UbiD family. In terms of assembly, homohexamer. Prenylated FMN is required as a cofactor. It depends on Mn(2+) as a cofactor.

The protein resides in the cell membrane. The enzyme catalyses a 4-hydroxy-3-(all-trans-polyprenyl)benzoate + H(+) = a 2-(all-trans-polyprenyl)phenol + CO2. Its pathway is cofactor biosynthesis; ubiquinone biosynthesis. Functionally, catalyzes the decarboxylation of 3-octaprenyl-4-hydroxy benzoate to 2-octaprenylphenol, an intermediate step in ubiquinone biosynthesis. The protein is 3-octaprenyl-4-hydroxybenzoate carboxy-lyase of Saccharophagus degradans (strain 2-40 / ATCC 43961 / DSM 17024).